Here is a 506-residue protein sequence, read N- to C-terminus: Photosystem II CP47 reaction center protein (506 aa).

The next 6 helical transmembrane spans lie at 21–36 (SVHI…WAGS), 101–115 (ILFS…IWHW), 140–156 (GIHL…FGAF), 203–218 (IAAG…FHLS), 237–252 (VLSS…AFVV), and 457–472 (SFAL…HGAR).

The protein belongs to the PsbB/PsbC family. PsbB subfamily. PSII is composed of 1 copy each of membrane proteins PsbA, PsbB, PsbC, PsbD, PsbE, PsbF, PsbH, PsbI, PsbJ, PsbK, PsbL, PsbM, PsbT, PsbX, PsbY, PsbZ, Psb30/Ycf12, at least 3 peripheral proteins of the oxygen-evolving complex and a large number of cofactors. It forms dimeric complexes. It depends on Binds multiple chlorophylls. PSII binds additional chlorophylls, carotenoids and specific lipids. as a cofactor.

Its subcellular location is the plastid. The protein localises to the chloroplast thylakoid membrane. Functionally, one of the components of the core complex of photosystem II (PSII). It binds chlorophyll and helps catalyze the primary light-induced photochemical processes of PSII. PSII is a light-driven water:plastoquinone oxidoreductase, using light energy to abstract electrons from H(2)O, generating O(2) and a proton gradient subsequently used for ATP formation. This chain is Photosystem II CP47 reaction center protein, found in Cucumis sativus (Cucumber).